Here is a 273-residue protein sequence, read N- to C-terminus: MDITGNAFVVGGGGGIGKACALAFATEGATVVAVADLDAKKAVEVAAECQALAPSAEFRAIGVQIDITQEDSVRSATEQVVQLLGRIDYCVNCAGIGVQQGADIATLPLAEFRRFLDVNTIGMFLVTREVSAAMRAQEPRLVSSESPRRGTTRGAIVNLASVLSVVAAPGIIPYTASKHAVLGLTKNAALDNVSHGIRVNCVCPSWVDTPMVQQAEEGVQGLTQFIKSVVPMGRIAVPEEIADAVIFLASPRSSYVTGSGFIVDGGTTLTAMS.

Residues Ile16, Asp66, Arg128, Tyr174, Lys178, Val207, and Thr209 each coordinate NADP(+). The active-site Proton donor is the Tyr174. The active-site Lowers pKa of active site Tyr is Lys178.

The protein belongs to the short-chain dehydrogenases/reductases (SDR) family.

Short-chain dehydrogenase; part of the gene cluster that mediates the biosynthesis of flavoglaucin and congeners (including aspergin, dihydroauroglaucin and auroglaucin), prenylated salicylaldehyde derivatives carrying a saturated or an unsaturated C-7 side chain. The PKS fogA releases the carboxylic acid (8E,10E,12E)-3,5,7-trihydroxytetradeca-8,10,12-trienoic acid as its product, as well as derivatives with one and two double bonds. FogA is indeed able to reduce the initial triketide, thus being at least partially responsible for the differently saturated heptyl side chains of flavoglaucin congeners. The oxidoreductases fogB, fogC and fogD modify the nascent polyketide in fogA-bound form and, together, fogA, fogB, fogC and fogD are necessary for the formation of the aromatic core and the cyclized PKS products are released as salicyl alcohols. In particular, fogB is responsible for oxidation of a hydroxyl group or reduction of remaining double bond(s) at the C-7 residue whereas fogD is probably involved in the reductive release of the modified PKS products. The cytochrome P450 monooxygenase fogE is then responsible for the hydroxylation at C-3 of the benzene ring. The fogE products are substrates of the prenyltransferase fogH and the prenylated benzyl alcohols are subsequently oxidized by the fogF to produce the final aryl aldehydes flavoglaucin and congeners. The short-chain dehydrogenase fogG does not seem to be involved in the biosynthesis of the prenylated salicylaldehyde derivatives. This Aspergillus ruber (strain CBS 135680) protein is Short-chain dehydrogenase fogB.